Reading from the N-terminus, the 735-residue chain is FHF complex subunit HOOK-interacting protein 2B (735 aa).

Residues 183–229 (SSSTSDEAAEKDCSGSSSPERASSPSSSSSACSLLSRSGAHPVSSPQ) are disordered. Over residues 196–221 (SGSSSPERASSPSSSSSACSLLSRSG) the composition is skewed to low complexity.

It belongs to the FHIP family.

The sequence is that of FHF complex subunit HOOK-interacting protein 2B (fhip2b) from Danio rerio (Zebrafish).